The following is a 348-amino-acid chain: S-adenosyl-L-methionine-dependent methyl transferase PigF (348 aa).

Glu-199 is a binding site for S-adenosyl-L-methionine. The active-site Proton acceptor is the His-247.

This sequence belongs to the class I-like SAM-binding methyltransferase superfamily. Cation-independent O-methyltransferase family.

It functions in the pathway antibiotic biosynthesis; prodigiosin biosynthesis. Functionally, involved in the biosynthesis of 4-methoxy-2,2'-bipyrrole-5-carbaldehyde (MBC), one of the terminal products involved in the biosynthesis of the red antibiotic prodigiosin (Pig). Catalyzes the transfer of a methyl group from S-adenosyl-L-methionine (SAM) to the hydroxyl group of 4-hydroxy-2,2'-bipyrrole-5-carbaldehyde (HBC) to yield 4-methoxy-2,2'-bipyrrole-5-carbaldehyde (MBC). The polypeptide is S-adenosyl-L-methionine-dependent methyl transferase PigF (Serratia sp. (strain ATCC 39006) (Prodigiosinella confusarubida)).